We begin with the raw amino-acid sequence, 411 residues long: Multidrug resistance protein MdtA (411 aa).

Residues 1 to 26 form the signal peptide; it reads MNNNKKTKKRFSLIIILLIVIAGAIA. Over residues 35 to 55 the composition is skewed to polar residues; sequence SAPPVSKDTPTANTPNRSTAG. The disordered stretch occupies residues 35 to 64; it reads SAPPVSKDTPTANTPNRSTAGSRRPPMPPV.

The protein belongs to the membrane fusion protein (MFP) (TC 8.A.1) family. In terms of assembly, part of a tripartite efflux system composed of MdtA, MdtB and MdtC.

The protein resides in the cell inner membrane. The sequence is that of Multidrug resistance protein MdtA from Proteus mirabilis (strain HI4320).